A 197-amino-acid polypeptide reads, in one-letter code: Probable GTP-binding protein EngB (197 aa).

The EngB-type G domain maps to asparagine 22–glutamate 195. GTP is bound by residues glycine 30–serine 37, glycine 57–leucine 61, aspartate 75–glycine 78, threonine 142–aspartate 145, and phenylalanine 174–serine 176. Positions 37 and 59 each coordinate Mg(2+).

The protein belongs to the TRAFAC class TrmE-Era-EngA-EngB-Septin-like GTPase superfamily. EngB GTPase family. Requires Mg(2+) as cofactor.

Its function is as follows. Necessary for normal cell division and for the maintenance of normal septation. This is Probable GTP-binding protein EngB from Clostridium perfringens (strain SM101 / Type A).